The chain runs to 376 residues: Palmitoyltransferase PFA4 (376 aa).

Over 1-11 (MPVKLKWPWLG) the chain is Cytoplasmic. Residues 12 to 32 (IAIPSFLIASIGYCAHYFILL) form a helical membrane-spanning segment. The Lumenal portion of the chain corresponds to 33–40 (NFLSLRKQ). Residues 41 to 61 (LWYQFCQTMIWLSYYLAIYTP) form a helical membrane-spanning segment. The Cytoplasmic portion of the chain corresponds to 62-122 (PGKPPTNFKP…NCVGYNNFPH (61 aa)). One can recognise a DHHC domain in the interval 78 to 128 (VYCKKCKCYKPERSHHCKTCNQCVLMMDHHCPWTMNCVGYNNFPHFIRFLF). C108 acts as the S-palmitoyl cysteine intermediate in catalysis. The helical transmembrane segment at 123-143 (FIRFLFWVIVGTTSLAIFLTT) threads the bilayer. Residues 144 to 163 (RIHSIWVHRSSPSYLYYKSE) lie on the Lumenal side of the membrane. The helical transmembrane segment at 164–184 (LIFLTILTPLNAFILLTISIL) threads the bilayer. At 185 to 376 (MIRCLFNQIF…EDFGVDVDVE (192 aa)) the chain is on the cytoplasmic side.

It belongs to the DHHC palmitoyltransferase family. PFA4 subfamily.

The protein resides in the endoplasmic reticulum membrane. It carries out the reaction L-cysteinyl-[protein] + hexadecanoyl-CoA = S-hexadecanoyl-L-cysteinyl-[protein] + CoA. Mediates the reversible addition of palmitate to target proteins, thereby regulating their membrane association and biological function. This Candida glabrata (strain ATCC 2001 / BCRC 20586 / JCM 3761 / NBRC 0622 / NRRL Y-65 / CBS 138) (Yeast) protein is Palmitoyltransferase PFA4.